The primary structure comprises 194 residues: FMN-dependent NADH:quinone oxidoreductase (194 aa).

Residues Ser9, 15 to 17, and 85 to 88 contribute to the FMN site; these read SIS and MYNF.

This sequence belongs to the azoreductase type 1 family. Homodimer. It depends on FMN as a cofactor.

It carries out the reaction 2 a quinone + NADH + H(+) = 2 a 1,4-benzosemiquinone + NAD(+). The catalysed reaction is N,N-dimethyl-1,4-phenylenediamine + anthranilate + 2 NAD(+) = 2-(4-dimethylaminophenyl)diazenylbenzoate + 2 NADH + 2 H(+). Its function is as follows. Quinone reductase that provides resistance to thiol-specific stress caused by electrophilic quinones. Also exhibits azoreductase activity. Catalyzes the reductive cleavage of the azo bond in aromatic azo compounds to the corresponding amines. The chain is FMN-dependent NADH:quinone oxidoreductase from Xanthomonas oryzae pv. oryzae (strain KACC10331 / KXO85).